The following is a 213-amino-acid chain: Kynurenine formamidase (213 aa).

Tryptophan 15 is a binding site for substrate. 3 residues coordinate Zn(2+): histidine 45, histidine 49, and aspartate 51. Residue histidine 55 is the Proton donor/acceptor of the active site. The Zn(2+) site is built by histidine 157 and glutamate 169.

It belongs to the Cyclase 1 superfamily. KynB family. As to quaternary structure, homodimer. It depends on Zn(2+) as a cofactor.

The enzyme catalyses N-formyl-L-kynurenine + H2O = L-kynurenine + formate + H(+). It participates in amino-acid degradation; L-tryptophan degradation via kynurenine pathway; L-kynurenine from L-tryptophan: step 2/2. Its function is as follows. Catalyzes the hydrolysis of N-formyl-L-kynurenine to L-kynurenine, the second step in the kynurenine pathway of tryptophan degradation. The sequence is that of Kynurenine formamidase from Deinococcus geothermalis (strain DSM 11300 / CIP 105573 / AG-3a).